The following is a 463-amino-acid chain: Immune-associated nucleotide-binding protein 10 (463 aa).

The region spanning 3–211 (EPIKNIVLVG…YTYQLHRKIK (209 aa)) is the AIG1-type G domain. The tract at residues 12-19 (GRTGNGKS) is G1. Residues 12–20 (GRTGNGKSS) and Ser-33 each bind GTP. A G2 region spans residues 39–43 (GVTMI). Residues 61–64 (DTPG) are G3. The tract at residues 131–134 (TGGD) is G4. The G5 stretch occupies residues 170–172 (DNK). Asn-171 lines the GTP pocket. Residues 173–308 (SKDEKKKVEQ…KQLIAQANRM (136 aa)) adopt a coiled-coil conformation.

It belongs to the TRAFAC class TrmE-Era-EngA-EngB-Septin-like GTPase superfamily. AIG1/Toc34/Toc159-like paraseptin GTPase family. IAN subfamily. As to expression, expressed in radicles of the germinating seeds.

This is Immune-associated nucleotide-binding protein 10 from Arabidopsis thaliana (Mouse-ear cress).